Here is a 317-residue protein sequence, read N- to C-terminus: Acetyl-coenzyme A carboxylase carboxyl transferase subunit alpha (317 aa).

One can recognise a CoA carboxyltransferase C-terminal domain in the interval 39 to 293 (RLESRVNDAM…GDVIAKALAD (255 aa)).

Belongs to the AccA family. As to quaternary structure, acetyl-CoA carboxylase is a heterohexamer composed of biotin carboxyl carrier protein (AccB), biotin carboxylase (AccC) and two subunits each of ACCase subunit alpha (AccA) and ACCase subunit beta (AccD).

It is found in the cytoplasm. It carries out the reaction N(6)-carboxybiotinyl-L-lysyl-[protein] + acetyl-CoA = N(6)-biotinyl-L-lysyl-[protein] + malonyl-CoA. It participates in lipid metabolism; malonyl-CoA biosynthesis; malonyl-CoA from acetyl-CoA: step 1/1. Functionally, component of the acetyl coenzyme A carboxylase (ACC) complex. First, biotin carboxylase catalyzes the carboxylation of biotin on its carrier protein (BCCP) and then the CO(2) group is transferred by the carboxyltransferase to acetyl-CoA to form malonyl-CoA. The sequence is that of Acetyl-coenzyme A carboxylase carboxyl transferase subunit alpha from Agrobacterium fabrum (strain C58 / ATCC 33970) (Agrobacterium tumefaciens (strain C58)).